A 207-amino-acid polypeptide reads, in one-letter code: Tetrathionate reductase subunit B (207 aa).

Residues Met1–Met28 form the signal peptide. 4Fe-4S ferredoxin-type domains are found at residues Tyr34–Tyr63, Gly75–Glu106, and Gly107–Val136. [4Fe-4S] cluster is bound by residues Cys43, Cys46, Cys49, Cys53, Cys84, Cys87, Cys92, Cys96, Cys116, Cys119, Cys122, Cys126, Cys143, Cys146, Cys157, and Cys161.

As to quaternary structure, probably composed of three subunits: TtrA, TtrB and TtrC.

It is found in the cell membrane. In terms of biological role, part of a membrane-bound tetrathionate reductase that catalyzes the reduction of tetrathionate to thiosulfate. TtrB is probably involved in transfer of electrons from TtrC to TtrA. This is Tetrathionate reductase subunit B (ttrB) from Archaeoglobus fulgidus (strain ATCC 49558 / DSM 4304 / JCM 9628 / NBRC 100126 / VC-16).